We begin with the raw amino-acid sequence, 161 residues long: Phosphopantetheine adenylyltransferase (161 aa).

Residue Thr10 participates in substrate binding. Residues 10 to 11 and His18 contribute to the ATP site; that span reads TF. Substrate contacts are provided by Lys42, Met74, and Arg88. Residues 89 to 91, Glu99, and 124 to 130 contribute to the ATP site; these read GLR and WSFISSS.

Belongs to the bacterial CoaD family. In terms of assembly, homohexamer. The cofactor is Mg(2+).

It is found in the cytoplasm. The enzyme catalyses (R)-4'-phosphopantetheine + ATP + H(+) = 3'-dephospho-CoA + diphosphate. It participates in cofactor biosynthesis; coenzyme A biosynthesis; CoA from (R)-pantothenate: step 4/5. In terms of biological role, reversibly transfers an adenylyl group from ATP to 4'-phosphopantetheine, yielding dephospho-CoA (dPCoA) and pyrophosphate. In Edwardsiella ictaluri (strain 93-146), this protein is Phosphopantetheine adenylyltransferase.